A 207-amino-acid polypeptide reads, in one-letter code: Outer-membrane lipoprotein LolB (207 aa).

A signal peptide spans 1–21; that stretch reads MPIRKVSLLRLIPLASLVLAA. Cys22 carries the N-palmitoyl cysteine lipid modification. Cys22 is lipidated: S-diacylglycerol cysteine.

This sequence belongs to the LolB family. In terms of assembly, monomer.

It localises to the cell outer membrane. Plays a critical role in the incorporation of lipoproteins in the outer membrane after they are released by the LolA protein. The chain is Outer-membrane lipoprotein LolB from Serratia proteamaculans (strain 568).